Here is a 112-residue protein sequence, read N- to C-terminus: Omega-agatoxin-1A (112 aa).

The N-terminal stretch at 1–19 (MMKFVVFLACLFVAAHSFA) is a signal peptide. Residues 20–36 (VEGEEEYFEAEVPELER) constitute a propeptide that is removed on maturation. Positions 103 to 109 (RSEESER) are cleaved as a propeptide — glu-rich.

Belongs to the neurotoxin 04 (omega-agtx) family. 01 (type I omega-agtx) subfamily. As to quaternary structure, heterodimer of two subunits, a major chain and a minor chain, linked by a disulfide bond. In terms of processing, proteolytically processed to yield the major and the minor chains. In terms of tissue distribution, expressed by the venom gland.

Its subcellular location is the secreted. Its function is as follows. Omega-agatoxins are antagonists of voltage-gated calcium channels. They block insect neuromuscular transmission presynaptically. This toxin is a blocker of L-type calcium channels (Cav/CACNA1). The chain is Omega-agatoxin-1A from Agelenopsis aperta (North American funnel-web spider).